The primary structure comprises 627 residues: 1,4-alpha-glucan branching enzyme GlgB (627 aa).

Catalysis depends on Asp-309, which acts as the Nucleophile. The active-site Proton donor is the Glu-352.

The protein belongs to the glycosyl hydrolase 13 family. GlgB subfamily. In terms of assembly, monomer.

It catalyses the reaction Transfers a segment of a (1-&gt;4)-alpha-D-glucan chain to a primary hydroxy group in a similar glucan chain.. Its pathway is glycan biosynthesis; glycogen biosynthesis. Its function is as follows. Catalyzes the formation of the alpha-1,6-glucosidic linkages in glycogen by scission of a 1,4-alpha-linked oligosaccharide from growing alpha-1,4-glucan chains and the subsequent attachment of the oligosaccharide to the alpha-1,6 position. The protein is 1,4-alpha-glucan branching enzyme GlgB (glgB) of Bacillus subtilis (strain 168).